The sequence spans 564 residues: Formate--tetrahydrofolate ligase (564 aa).

65–72 (TPLGEGKT) contacts ATP.

It belongs to the formate--tetrahydrofolate ligase family.

The enzyme catalyses (6S)-5,6,7,8-tetrahydrofolate + formate + ATP = (6R)-10-formyltetrahydrofolate + ADP + phosphate. The protein operates within one-carbon metabolism; tetrahydrofolate interconversion. This is Formate--tetrahydrofolate ligase from Roseiflexus castenholzii (strain DSM 13941 / HLO8).